The sequence spans 513 residues: Microcin J25-processing protein McjC (513 aa).

An Asparagine synthetase domain is found at 176–436; that stretch reads STIDSIIDNI…FGSDIFWKKT (261 aa).

The protein resides in the cytoplasm. In terms of biological role, along with McjB, necessary and sufficient to process the inactive microcin J25 (McjA) precursor into the active peptide. May be involved in the formation of the amide bond between Gly-38 and Glu-53 of McjA. In Escherichia coli, this protein is Microcin J25-processing protein McjC (mcjC).